Reading from the N-terminus, the 456-residue chain is Decaprenyl-diphosphate synthase (456 aa).

Isopentenyl diphosphate is bound by residues lysine 183, arginine 186, and histidine 216. Mg(2+)-binding residues include aspartate 223 and aspartate 227. Position 233 (arginine 233) interacts with isopentenyl diphosphate.

It belongs to the FPP/GGPP synthase family. Mg(2+) serves as cofactor.

Its subcellular location is the mitochondrion. It carries out the reaction 7 isopentenyl diphosphate + (2E,6E)-farnesyl diphosphate = all-trans-decaprenyl diphosphate + 7 diphosphate. It functions in the pathway cofactor biosynthesis; ubiquinone biosynthesis. Functionally, supplies decaprenyl diphosphate, the precursor for the side chain of the isoprenoid quinones ubiquinone-10. The protein is Decaprenyl-diphosphate synthase (coq1) of Dictyostelium discoideum (Social amoeba).